The sequence spans 100 residues: Large ribosomal subunit protein uL23 (100 aa).

This sequence belongs to the universal ribosomal protein uL23 family. Part of the 50S ribosomal subunit. Contacts protein L29, and trigger factor when it is bound to the ribosome.

Functionally, one of the early assembly proteins it binds 23S rRNA. One of the proteins that surrounds the polypeptide exit tunnel on the outside of the ribosome. Forms the main docking site for trigger factor binding to the ribosome. The sequence is that of Large ribosomal subunit protein uL23 from Corynebacterium aurimucosum (strain ATCC 700975 / DSM 44827 / CIP 107346 / CN-1) (Corynebacterium nigricans).